Here is a 210-residue protein sequence, read N- to C-terminus: dTTP/UTP pyrophosphatase (210 aa).

Over residues 1 to 15 the composition is skewed to basic and acidic residues; the sequence is MTHGDNRDGPGRETR. The interval 1–22 is disordered; the sequence is MTHGDNRDGPGRETRSSGPLVL. Aspartate 86 (proton acceptor) is an active-site residue.

Belongs to the Maf family. YhdE subfamily. It depends on a divalent metal cation as a cofactor.

The protein resides in the cytoplasm. The catalysed reaction is dTTP + H2O = dTMP + diphosphate + H(+). It catalyses the reaction UTP + H2O = UMP + diphosphate + H(+). Functionally, nucleoside triphosphate pyrophosphatase that hydrolyzes dTTP and UTP. May have a dual role in cell division arrest and in preventing the incorporation of modified nucleotides into cellular nucleic acids. This chain is dTTP/UTP pyrophosphatase, found in Rhodospirillum rubrum (strain ATCC 11170 / ATH 1.1.1 / DSM 467 / LMG 4362 / NCIMB 8255 / S1).